The sequence spans 78 residues: RTX-VII (78 aa).

An N-terminal signal peptide occupies residues 1–22; sequence MKTIVYLIVSILLLSSTVLVLA. Residues 23 to 40 constitute a propeptide that is removed on maturation; that stretch reads EGNAASHELQEYPIEEQR. 4 disulfide bridges follow: C42-C58, C47-C63, C57-C73, and C65-C71. Arginine amide is present on R76.

Expressed by the venom gland.

It is found in the secreted. In terms of biological role, agonist of rat Nav1.3/SCN3A. This toxin increases the peak current amplitude, and potently inhibits the fast inactivation of the channel (EC(50)=120 nM). The inhibition of fast inactivation is voltage-independent (depolarizing voltages ranging from 220 mV to 130 mV). The toxin might bind to the domain IV of the Nav1.3 channel, while domain II might not participate in interacting with the toxin but could determine the efficacy of RTX-VII. In vivo, when intracerebroventricularly injected into mice, the toxin causes involuntary body twitching (seizure-like symptoms). In Macrothele raveni (Funnel-web spider), this protein is RTX-VII.